A 120-amino-acid chain; its full sequence is Large ribosomal subunit protein eL8 (120 aa).

It belongs to the eukaryotic ribosomal protein eL8 family. In terms of assembly, part of the 50S ribosomal subunit. Probably part of the RNase P complex.

The protein resides in the cytoplasm. Its function is as follows. Multifunctional RNA-binding protein that recognizes the K-turn motif in ribosomal RNA, the RNA component of RNase P, box H/ACA, box C/D and box C'/D' sRNAs. The chain is Large ribosomal subunit protein eL8 from Natronomonas pharaonis (strain ATCC 35678 / DSM 2160 / CIP 103997 / JCM 8858 / NBRC 14720 / NCIMB 2260 / Gabara) (Halobacterium pharaonis).